The following is a 262-amino-acid chain: Tritrans,polycis-undecaprenyl-diphosphate synthase (geranylgeranyl-diphosphate specific) (262 aa).

D40 is a catalytic residue. D40 is a Mg(2+) binding site. Residues 41-44 (GNRR), W45, and 85-87 (STE) contribute to the substrate site. N88 acts as the Proton acceptor in catalysis. Substrate is bound by residues R92, R211, and 217 to 219 (RIS). E230 contributes to the Mg(2+) binding site.

This sequence belongs to the UPP synthase family. In terms of assembly, homodimer. Requires Mg(2+) as cofactor.

The enzyme catalyses geranylgeranyl diphosphate + 7 isopentenyl diphosphate = tri-trans,hepta-cis-undecaprenyl diphosphate + 7 diphosphate. Catalyzes the sequential condensation of isopentenyl diphosphate (IPP) with geranylgeranyl diphosphate (GGPP) to yield (2Z,6Z,10Z,14Z,18Z,22Z,26Z,30E,34E,38E)-undecaprenyl diphosphate (tritrans,heptacis-UPP). It is probably the precursor of glycosyl carrier lipids. This is Tritrans,polycis-undecaprenyl-diphosphate synthase (geranylgeranyl-diphosphate specific) from Sulfurisphaera tokodaii (strain DSM 16993 / JCM 10545 / NBRC 100140 / 7) (Sulfolobus tokodaii).